The chain runs to 399 residues: Enolase (399 aa).

Gln-152 is a (2R)-2-phosphoglycerate binding site. Glu-194 acts as the Proton donor in catalysis. Mg(2+) is bound by residues Asp-230, Glu-273, and Asp-301. Lys-326, Arg-355, Ser-356, and Lys-377 together coordinate (2R)-2-phosphoglycerate. Residue Lys-326 is the Proton acceptor of the active site.

The protein belongs to the enolase family. Mg(2+) is required as a cofactor.

The protein resides in the cytoplasm. It localises to the secreted. Its subcellular location is the cell surface. It carries out the reaction (2R)-2-phosphoglycerate = phosphoenolpyruvate + H2O. It functions in the pathway carbohydrate degradation; glycolysis; pyruvate from D-glyceraldehyde 3-phosphate: step 4/5. In terms of biological role, catalyzes the reversible conversion of 2-phosphoglycerate (2-PG) into phosphoenolpyruvate (PEP). It is essential for the degradation of carbohydrates via glycolysis. The protein is Enolase of Methanocorpusculum labreanum (strain ATCC 43576 / DSM 4855 / Z).